A 167-amino-acid polypeptide reads, in one-letter code: Small heat shock protein C1 (167 aa).

The sHSP domain occupies 59–167; sequence PLYESNSIKS…EQDAREITIN (109 aa).

This sequence belongs to the small heat shock protein (HSP20) family.

This chain is Small heat shock protein C1 (hspC1), found in Rickettsia felis (strain ATCC VR-1525 / URRWXCal2) (Rickettsia azadi).